Consider the following 1025-residue polypeptide: Glycine dehydrogenase (decarboxylating), mitochondrial (1025 aa).

The N-terminal 35 residues, 1–35 (MQLCARAWGLRLGRGAGGGHRLARGTGLSWAQRSR), are a transit peptide targeting the mitochondrion. The disordered stretch occupies residues 16 to 51 (AGGGHRLARGTGLSWAQRSRDSSGGGGGGGGGDRGA). A compositionally biased stretch (gly residues) spans 38–50 (SGGGGGGGGGDRG). 4 positions are modified to N6-acetyllysine: Lys-452, Lys-519, Lys-653, and Lys-669. Lys-759 bears the N6-(pyridoxal phosphate)lysine mark.

It belongs to the GcvP family. In terms of assembly, interacts with GCSH. Homodimer. The glycine cleavage system is composed of four proteins: P (GLDC), T (GCST), L (DLD) and H (GCSH). Pyridoxal 5'-phosphate is required as a cofactor.

The protein resides in the mitochondrion. It carries out the reaction N(6)-[(R)-lipoyl]-L-lysyl-[glycine-cleavage complex H protein] + glycine + H(+) = N(6)-[(R)-S(8)-aminomethyldihydrolipoyl]-L-lysyl-[glycine-cleavage complex H protein] + CO2. Stimulated by lipoic acid. Inhibited in presence of methylamine. The glycine cleavage system catalyzes the degradation of glycine. The P protein (GLDC) binds the alpha-amino group of glycine through its pyridoxal phosphate cofactor; CO(2) is released and the remaining methylamine moiety is then transferred to the lipoamide cofactor of the H protein (GCSH). The protein is Glycine dehydrogenase (decarboxylating), mitochondrial of Mus musculus (Mouse).